We begin with the raw amino-acid sequence, 243 residues long: MRPSTRFLRSVTRTVPIGFRSTTVPFVSSTLRSSAATSNQFSARFSGVRFYADEAKKEEPKDENDAAAAEEDANLTEEQKKIKDLETKLDAKTKEASEFKDRLLRSVADFRNLQEVTKKDIQKAKDFALQKFAKDLLESVDNFGHALNAFKPETLEQSQELSDLYTGVKMTRDVFEKTLKKHGIEQLNPIGESFDPNKHEATFELPQPDKEPGTVFHVQQIGYTLNDRVIRPAKVGIVKDNEN.

Positions 56-79 (KKEEPKDENDAAAAEEDANLTEEQ) are disordered.

The protein belongs to the GrpE family. Component of the PAM complex, at least composed of mtHsp70, MGE1, TIM44, PAM16, PAM17 and PAM18.

Its subcellular location is the mitochondrion matrix. Functionally, essential component of the PAM complex, a complex required for the translocation of transit peptide-containing proteins from the inner membrane into the mitochondrial matrix in an ATP-dependent manner. Seems to control the nucleotide-dependent binding of SSC1 to substrate proteins. The sequence is that of GrpE protein homolog, mitochondrial (mge1) from Kluyveromyces lactis (strain ATCC 8585 / CBS 2359 / DSM 70799 / NBRC 1267 / NRRL Y-1140 / WM37) (Yeast).